The sequence spans 367 residues: Alanine racemase (367 aa).

K40 serves as the catalytic Proton acceptor; specific for D-alanine. An N6-(pyridoxal phosphate)lysine modification is found at K40. R136 contacts substrate. Residue Y263 is the Proton acceptor; specific for L-alanine of the active site. M310 lines the substrate pocket.

Belongs to the alanine racemase family. Pyridoxal 5'-phosphate serves as cofactor.

It catalyses the reaction L-alanine = D-alanine. The protein operates within amino-acid biosynthesis; D-alanine biosynthesis; D-alanine from L-alanine: step 1/1. Its function is as follows. Catalyzes the interconversion of L-alanine and D-alanine. May also act on other amino acids. This is Alanine racemase (alr) from Streptococcus thermophilus (strain CNRZ 1066).